Here is a 492-residue protein sequence, read N- to C-terminus: MDPYKFRPSSSNDTPFWTTNAGDPVSNNNSSMTVGPRGPILLEDYHMIEKLANFTRERIPERVVHARGMSAKGFFEVTHDVTDLTCADFLRAPGVQTPVIVRFSTVIHERGSPETLRDPRGFATKFYTREGNFDIVGNNFPVFFIRDGIKFPDVVHAFKPNPKSHIQEYWRIFDFCSHHPESLSTFAWFFDDVGIPQDYRHMEGFGVHTYCLINKAGKVTYVKFHWKPTCGVKCLMDDEAIKVGGANHSHATQDLYDSIAAGNFPEWKLMIQTMDPADEDKFSFDPLDMTKIWPEDMFPLHPVGRLVLNRNIDNWFAENEMLAFNPAHVVPGVYYSNDKLFQLRLFAYSDTQRHRLGTNYLQLPVNAPKCPYHNNHYDGFMNFMHRDEEVDYFQSRYDPVRHAEKVPIPNAICSGRREKCVIEKEDNFRQPGDRYRSWAPDRQERFLCRLVNALSEPRITHEIRSIWVSWWTQCDKSLGQKLASRLNVRPNI.

Positions 1–32 (MDPYKFRPSSSNDTPFWTTNAGDPVSNNNSSM) are disordered. The segment covering 8-32 (PSSSNDTPFWTTNAGDPVSNNNSSM) has biased composition (polar residues). Active-site residues include His-65 and Asn-138. Residue Tyr-348 coordinates heme.

It belongs to the catalase family. In terms of assembly, homotetramer. It depends on heme as a cofactor. As to expression, abundant in hypocotyls and roots. Low levels are seen in the endosperms and cotyledons.

The protein localises to the peroxisome. It localises to the glyoxysome. It carries out the reaction 2 H2O2 = O2 + 2 H2O. Its function is as follows. Occurs in almost all aerobically respiring organisms and serves to protect cells from the toxic effects of hydrogen peroxide. The polypeptide is Catalase isozyme 2 (CAT2) (Ricinus communis (Castor bean)).